Here is a 239-residue protein sequence, read N- to C-terminus: Vesicle-associated protein 1-3 (239 aa).

Residue Met1 is modified to N-acetylmethionine. Thr2 carries the N-acetylthreonine; in Vesicle-associated protein 1-3, N-terminally processed modification. Over 2–215 the chain is Cytoplasmic; that stretch reads TTGDLVNIHP…RKETSKKQSG (214 aa). In terms of domain architecture, MSP spans 6 to 127; that stretch reads LVNIHPTELK…EDFKLRVVYI (122 aa). Phosphoserine is present on residues Ser133 and Ser164. Residues 179-214 adopt a coiled-coil conformation; it reads SMISKLTEEKTSATQQSQKLRLELEMLRKETSKKQS. The chain crosses the membrane as a helical; Anchor for type IV membrane protein span at residues 216–236; the sequence is GHSLLLMLLVGLLGCVIGYLL.

It belongs to the VAMP-associated protein (VAP) (TC 9.B.17) family.

Its subcellular location is the endoplasmic reticulum membrane. In terms of biological role, may play a role in vesicle trafficking. The sequence is that of Vesicle-associated protein 1-3 (PVA13) from Arabidopsis thaliana (Mouse-ear cress).